The following is a 134-amino-acid chain: Small ribosomal subunit protein uS17c (134 aa).

The N-terminal 37 residues, 1 to 37, are a transit peptide targeting the chloroplast; sequence HHFFTGNGIGLNRFSNPISSPQTQTQTRSLPFPAIKA. The interval 106–134 is disordered; that stretch reads FLAVPAPSRKSKKAGSSGELGIPLQSQQE.

The protein belongs to the universal ribosomal protein uS17 family. In terms of assembly, part of the 30S ribosomal subunit.

The protein resides in the plastid. The protein localises to the chloroplast. One of the primary rRNA binding proteins, it binds specifically to the 5'-end of 16S ribosomal RNA. This Pisum sativum (Garden pea) protein is Small ribosomal subunit protein uS17c (RPS17).